The sequence spans 1545 residues: Immunoglobulin A1 protease autotransporter (1545 aa).

A signal peptide spans 1–25; it reads MLNKKFKLNFIALTVAYALTPYTEA. Residues 26–336 form the Peptidase S6 domain; that stretch reads ALVRDDVDYQ…NIYKPEFAEK (311 aa). Residue serine 292 is part of the active site. Positions 995–1019 are enriched in polar residues; sequence TVDTTNITTPNNIQADVPSVPSNNE. The tract at residues 995-1246 is disordered; it reads TVDTTNITTP…NVEPATTSSN (252 aa). Over residues 1036–1046 the composition is skewed to low complexity; the sequence is TPSETTETVAE. Residues 1048–1060 show a composition bias toward basic and acidic residues; sequence SKQESKTVEKNEQ. The segment covering 1080 to 1094 has biased composition (polar residues); that stretch reads VKANTQTNEVAQSGS. Residues 1095–1125 are compositionally biased toward basic and acidic residues; the sequence is ETKETQTTETKETATVEKEEKAKVETEKTQE. 2 stretches are compositionally biased toward polar residues: residues 1129–1145 and 1161–1222; these read VTSQVSPKQEQSETVQP and EPQS…SSNK. In terms of domain architecture, Autotransporter spans 1293–1545; it reads NNEGQYNVWV…TAELKLSFSF (253 aa).

It localises to the periplasm. The protein localises to the secreted. The protein resides in the cell surface. Its subcellular location is the cell outer membrane. It catalyses the reaction Cleavage of immunoglobulin A molecules at certain Pro-|-Xaa bonds in the hinge region. No small molecule substrates are known.. Its function is as follows. Virulence factor; cleaves host immunoglobulin A producing intact Fc and Fab fragments. This chain is Immunoglobulin A1 protease autotransporter (iga), found in Haemophilus influenzae.